Here is a 311-residue protein sequence, read N- to C-terminus: Porphobilinogen deaminase (311 aa).

Cys-240 carries the post-translational modification S-(dipyrrolylmethanemethyl)cysteine.

The protein belongs to the HMBS family. Monomer. Requires dipyrromethane as cofactor.

It carries out the reaction 4 porphobilinogen + H2O = hydroxymethylbilane + 4 NH4(+). The protein operates within porphyrin-containing compound metabolism; protoporphyrin-IX biosynthesis; coproporphyrinogen-III from 5-aminolevulinate: step 2/4. Its function is as follows. Tetrapolymerization of the monopyrrole PBG into the hydroxymethylbilane pre-uroporphyrinogen in several discrete steps. The protein is Porphobilinogen deaminase of Natranaerobius thermophilus (strain ATCC BAA-1301 / DSM 18059 / JW/NM-WN-LF).